The chain runs to 392 residues: Hercynylcysteine sulfoxide lyase (392 aa).

Lys-219 is subject to N6-(pyridoxal phosphate)lysine.

The protein belongs to the class-V pyridoxal-phosphate-dependent aminotransferase family. EgtE subfamily. Pyridoxal 5'-phosphate serves as cofactor.

The protein resides in the cytoplasm. It is found in the nucleus. The catalysed reaction is S-(hercyn-2-yl)-L-cysteine S-oxide + AH2 + H(+) = ergothioneine + pyruvate + A + NH4(+). The protein operates within amino-acid biosynthesis; ergothioneine biosynthesis. Functionally, catalyzes the conversion of hercynylcysteine sulfoxide to ergothioneine by cleaving the cysteine residue at the sulfur atom, the last step in the biosynthesis pathway of ergothioneine. In Schizosaccharomyces pombe (strain 972 / ATCC 24843) (Fission yeast), this protein is Hercynylcysteine sulfoxide lyase.